The following is a 318-amino-acid chain: NADH-ubiquinone oxidoreductase chain 1 (318 aa).

Transmembrane regions (helical) follow at residues 3–23, 69–89, 100–120, 135–155, 171–191, 213–233, 253–273, and 294–314; these read TTNI…LTLV, FMFT…WIPL, LGIL…LWSG, AVAQ…SLVL, HMWL…STLA, VEYA…NIIL, ELHT…FLWI, and LPLT…FASI.

This sequence belongs to the complex I subunit 1 family.

The protein localises to the mitochondrion inner membrane. It catalyses the reaction a ubiquinone + NADH + 5 H(+)(in) = a ubiquinol + NAD(+) + 4 H(+)(out). In terms of biological role, core subunit of the mitochondrial membrane respiratory chain NADH dehydrogenase (Complex I) that is believed to belong to the minimal assembly required for catalysis. Complex I functions in the transfer of electrons from NADH to the respiratory chain. The immediate electron acceptor for the enzyme is believed to be ubiquinone. The protein is NADH-ubiquinone oxidoreductase chain 1 (MT-ND1) of Choloepus didactylus (Southern two-toed sloth).